Reading from the N-terminus, the 300-residue chain is uncharacterized protein (300 aa).

The signal sequence occupies residues 1–22 (MKSFVWTLLGALSLGSLTTAYG).

The protein localises to the endoplasmic reticulum. This is an uncharacterized protein from Schizosaccharomyces pombe (strain 972 / ATCC 24843) (Fission yeast).